A 440-amino-acid chain; its full sequence is MLTGVTDGIFCCLLGTPPNAVGPLESVESSDGYTFVEVKPGRVLRVKHAGPAPASAAPPPLSASSDAAQGDLSGLVRCQRRITVYRNGRLLVENLGRAPRADLLHGQNGSGEPPAALEMELADPAGSDGRSAPGSGSGSGSGSGSGGRRRRARRPKRTIHIDCEKRITSCKGAQADVVLFFIHGVGGSLAIWKEQLDFFVRLGYEVVAPDLAGHGASSAPQVAAAYTFYALAEDMRAIFKRYAKKRNVLIGHSYGVSFCTFLAHEYPDLVHKVIMINGGGPTALEPSFCSIFNMPTCVLHCLSPCLAWSFLKAGFARQGAKEKQLLKEGNAFNVSSFVLRAMMSGQYWPEGDEVYHAELTVPVLLVHGMHDKFVPVEEDQRMAEILLLAFLKLIDEGSHMVMLECPETVNTLLHEFLLWEPEPSPKALPEPLPAPPEDKK.

The tract at residues aspartate 123–threonine 158 is disordered. Residues proline 124 to glycine 134 show a composition bias toward low complexity. The span at serine 135–glycine 146 shows a compositional bias: gly residues. Residues glycine 147 to threonine 158 show a composition bias toward basic residues. In terms of domain architecture, AB hydrolase-1 spans valine 178 to glycine 280. Residues serine 253, aspartate 371, and histidine 399 each act as charge relay system in the active site.

This sequence belongs to the AB hydrolase superfamily. In terms of assembly, interacts with NLRP3 (via NACHT and LLR domains); this interaction is enhanced in the presence of NLRP3 inflammasome inducers, such as ATP, nigericin, silica, or alum. Interacts with ZDHHC12.

It localises to the cytoplasm. Negatively regulates NLRP3-driven inflammation. Promotes NLRP3 degradation through the chaperone-mediated autophagy (CMA) pathway, hence attenuating inflammasome activation and IL1B secretion. Acts by recruiting palmitoyltransferase ZDHHC12 to NLRP3, facilitating NLRP3 palmitoylation and subsequent degradation. The protein is Protein ABHD8 of Macaca fascicularis (Crab-eating macaque).